The following is a 307-amino-acid chain: Methionyl-tRNA formyltransferase (307 aa).

109-112 lines the (6S)-5,6,7,8-tetrahydrofolate pocket; that stretch reads SMLP.

Belongs to the Fmt family.

It catalyses the reaction L-methionyl-tRNA(fMet) + (6R)-10-formyltetrahydrofolate = N-formyl-L-methionyl-tRNA(fMet) + (6S)-5,6,7,8-tetrahydrofolate + H(+). Attaches a formyl group to the free amino group of methionyl-tRNA(fMet). The formyl group appears to play a dual role in the initiator identity of N-formylmethionyl-tRNA by promoting its recognition by IF2 and preventing the misappropriation of this tRNA by the elongation apparatus. The polypeptide is Methionyl-tRNA formyltransferase (Orientia tsutsugamushi (strain Boryong) (Rickettsia tsutsugamushi)).